The following is a 91-amino-acid chain: Putative protein p22 (91 aa).

In Escherichia coli (Bacteriophage APSE-1), this protein is Putative protein p22 (22).